Here is a 114-residue protein sequence, read N- to C-terminus: Tyrosine-protein phosphatase 11 (114 aa).

A Tyrosine-protein phosphatase domain is found at 1–114; that stretch reads WRMIWEHNTR…EAKHTGPTIV (114 aa). A substrate-binding site is contributed by Asp81.

The protein belongs to the protein-tyrosine phosphatase family.

It carries out the reaction O-phospho-L-tyrosyl-[protein] + H2O = L-tyrosyl-[protein] + phosphate. The sequence is that of Tyrosine-protein phosphatase 11 (STY-11) from Styela plicata (Wrinkled sea squirt).